A 410-amino-acid chain; its full sequence is MANHVAIIGNGVAGFTTAQALRAEGYEGRISLIGEEQHLPYDRPSLSKAVLDGSFEQPPRLAEADWYSEASIEMLTGSEVTDLDTQKKMISLNDGSTISADAIVIATGSRARMLSLPGSQLPGVVTLRTYGDVQLLRDSWTPNTRLLIVGGGLIGCEVATTARKLGLSVTILEAGDELLVRVLGRRIGAWLRGLLTEQGVQVELKTGVSGFSGEGQLEKVMVNDGRSFIADNALICVGADPADQLARQAGLECDRGVVVDHRGATSAKGIFAVGDVATWPLHSGGKRSLETYMNAQRQATAVAKAILGKEVSAPQLPVSWTEIAGHRMQMAGDIEGPGEYVLRGTLGIGSALLFRLLDGRIQAVVAVDAPRDFALANRLVEAQVIIEPEKLADVSNNMRDIVRANEGNQK.

4 to 35 (HVAIIGNGVAGFTTAQALRAEGYEGRISLIGE) is a binding site for FAD. Residue 145–173 (RLLIVGGGLIGCEVATTARKLGLSVTILE) participates in NAD(+) binding.

This sequence belongs to the bacterial ring-hydroxylating dioxygenase ferredoxin reductase family. In terms of assembly, this dioxygenase system consists of four proteins: the two subunits of the hydroxylase component (BedC1 and BedC2), a ferredoxin (BedB) and a ferredoxin reductase (BedA). FAD is required as a cofactor.

The catalysed reaction is 2 reduced [2Fe-2S]-[ferredoxin] + NAD(+) + H(+) = 2 oxidized [2Fe-2S]-[ferredoxin] + NADH. Its pathway is aromatic compound metabolism; benzene degradation; catechol from benzene: step 1/2. Functionally, part of the electron transfer component of benzene 1,2-dioxygenase, transfers electrons from ferredoxin to NADH. This is Benzene 1,2-dioxygenase system ferredoxin--NAD(+) reductase subunit (bedA) from Pseudomonas putida (Arthrobacter siderocapsulatus).